A 365-amino-acid chain; its full sequence is Guanine nucleotide-binding protein alpha-6 subunit (365 aa).

The N-myristoyl glycine moiety is linked to residue Gly2. The 323-residue stretch at 42-364 folds into the G-alpha domain; that stretch reads NRFKILLLGT…NENLRSAGLH (323 aa). The G1 motif stretch occupies residues 45–58; sequence KILLLGTAESGKST. GTP-binding positions include 50 to 57, 187 to 193, 212 to 216, 281 to 284, and Ala336; these read GTAESGKS, VHCRIST, DVGGQ, and NKYD. Residues Ser57 and Thr193 each contribute to the Mg(2+) site. Positions 185–193 are G2 motif; it reads DIVHCRIST. Residues 208-217 form a G3 motif region; it reads FKMVDVGGQR. Positions 277-284 are G4 motif; it reads VLFLNKYD. Residues 334–339 form a G5 motif region; it reads TTATDT.

This sequence belongs to the G-alpha family. In terms of assembly, g proteins are composed of 3 units; alpha, beta and gamma. The alpha chain contains the guanine nucleotide binding site.

Functionally, guanine nucleotide-binding proteins (G proteins) are involved as modulators or transducers in various transmembrane signaling systems. This chain is Guanine nucleotide-binding protein alpha-6 subunit (gpa-6), found in Caenorhabditis briggsae.